Consider the following 904-residue polypeptide: Protein translocase subunit SecA (904 aa).

ATP-binding positions include Q89, 107–111, and D502; that span reads GEGKT. Zn(2+) is bound by residues C886, C888, C897, and H898.

This sequence belongs to the SecA family. As to quaternary structure, monomer and homodimer. Part of the essential Sec protein translocation apparatus which comprises SecA, SecYEG and auxiliary proteins SecDF-YajC and YidC. Requires Zn(2+) as cofactor.

The protein resides in the cell inner membrane. It localises to the cytoplasm. The enzyme catalyses ATP + H2O + cellular proteinSide 1 = ADP + phosphate + cellular proteinSide 2.. Its function is as follows. Part of the Sec protein translocase complex. Interacts with the SecYEG preprotein conducting channel. Has a central role in coupling the hydrolysis of ATP to the transfer of proteins into and across the cell membrane, serving both as a receptor for the preprotein-SecB complex and as an ATP-driven molecular motor driving the stepwise translocation of polypeptide chains across the membrane. The protein is Protein translocase subunit SecA of Rhizobium etli (strain CIAT 652).